The following is a 314-amino-acid chain: tRNA dimethylallyltransferase (314 aa).

Residue 12–19 (GPTASGKT) coordinates ATP. Residue 14 to 19 (TASGKT) coordinates substrate. Interaction with substrate tRNA regions lie at residues 37–40 (DSAL) and 162–166 (QRIIR).

The protein belongs to the IPP transferase family. As to quaternary structure, monomer. It depends on Mg(2+) as a cofactor.

The enzyme catalyses adenosine(37) in tRNA + dimethylallyl diphosphate = N(6)-dimethylallyladenosine(37) in tRNA + diphosphate. Its function is as follows. Catalyzes the transfer of a dimethylallyl group onto the adenine at position 37 in tRNAs that read codons beginning with uridine, leading to the formation of N6-(dimethylallyl)adenosine (i(6)A). The polypeptide is tRNA dimethylallyltransferase (Acinetobacter baumannii (strain AB0057)).